A 186-amino-acid chain; its full sequence is MSTIPTTRSGLVVWFTGLSGAGKTTLARALATLLQEAGYPVEQLDGDVVREHLSKGLGFSREDRDTNIRRIGFVANLLAKHGVIVLVSAISPYRETRAEVLAAAPRKLEVFVEAPLDVLIQRDVKGLYAKALRGEIAQFTGISDPYEPPLHPDVHLRTDLMSLPECLDHLLAALERLDIVVKVSHQ.

17–24 (GLSGAGKT) serves as a coordination point for ATP. S91 functions as the Phosphoserine intermediate in the catalytic mechanism.

It belongs to the APS kinase family.

The catalysed reaction is adenosine 5'-phosphosulfate + ATP = 3'-phosphoadenylyl sulfate + ADP + H(+). It functions in the pathway sulfur metabolism; hydrogen sulfide biosynthesis; sulfite from sulfate: step 2/3. Its function is as follows. Catalyzes the synthesis of activated sulfate. The chain is Adenylyl-sulfate kinase from Chloroflexus aurantiacus (strain ATCC 29364 / DSM 637 / Y-400-fl).